A 700-amino-acid chain; its full sequence is Elongation factor G (700 aa).

The tr-type G domain occupies 8–290; the sequence is ERYRNIGISA…AVIDYLPAPT (283 aa). GTP is bound by residues 17–24, 88–92, and 142–145; these read AHIDAGKT, DTPGH, and NKMD.

The protein belongs to the TRAFAC class translation factor GTPase superfamily. Classic translation factor GTPase family. EF-G/EF-2 subfamily.

It localises to the cytoplasm. In terms of biological role, catalyzes the GTP-dependent ribosomal translocation step during translation elongation. During this step, the ribosome changes from the pre-translocational (PRE) to the post-translocational (POST) state as the newly formed A-site-bound peptidyl-tRNA and P-site-bound deacylated tRNA move to the P and E sites, respectively. Catalyzes the coordinated movement of the two tRNA molecules, the mRNA and conformational changes in the ribosome. The sequence is that of Elongation factor G (fusA) from Pasteurella multocida (strain Pm70).